Reading from the N-terminus, the 90-residue chain is Probable Fe(2+)-trafficking protein (90 aa).

This sequence belongs to the Fe(2+)-trafficking protein family. In terms of assembly, monomer.

In terms of biological role, could be a mediator in iron transactions between iron acquisition and iron-requiring processes, such as synthesis and/or repair of Fe-S clusters in biosynthetic enzymes. In Sodalis glossinidius (strain morsitans), this protein is Probable Fe(2+)-trafficking protein.